The chain runs to 139 residues: D-ribose pyranase (139 aa).

The active-site Proton donor is the H20. Substrate contacts are provided by residues D28, H106, and 128–130 (YAN).

Belongs to the RbsD / FucU family. RbsD subfamily. Homodecamer.

It is found in the cytoplasm. The catalysed reaction is beta-D-ribopyranose = beta-D-ribofuranose. The protein operates within carbohydrate metabolism; D-ribose degradation; D-ribose 5-phosphate from beta-D-ribopyranose: step 1/2. Catalyzes the interconversion of beta-pyran and beta-furan forms of D-ribose. The polypeptide is D-ribose pyranase (Histophilus somni (strain 2336) (Haemophilus somnus)).